Here is a 564-residue protein sequence, read N- to C-terminus: Homeobox protein unc-62 (564 aa).

Disordered stretches follow at residues N40–A59, E216–G270, S293–T313, P328–K397, and I455–L503. Residues S133 to A218 form the MEIS N-terminal domain. The segment covering S219–M230 has biased composition (low complexity). Composition is skewed to polar residues over residues P328 to S344 and L381 to N390. The segment at residues K392 to M454 is a DNA-binding region (homeobox; TALE-type). 2 stretches are compositionally biased toward polar residues: residues I455 to V469 and A494 to L503.

Belongs to the TALE/MEIS homeobox family. Forms a heterodimer with homeobox ceh-60.

It is found in the nucleus. In terms of biological role, acts redundantly with ceh-20 and ceh-40 to perform overlapping roles during embryogenesis. Required for postembryonic development of the ectoderm, including the Q, V and P cell lineages, playing a crucial role in ensuring that these cells and their descendants undergo their invariant patterns of cell division, migration, fusion and morphogenesis. Has a role in the mig-13 pathway to promote anterior migration of neuroblasts in the Q lineage. Required for multiple roles in regulating vulva development. Associates with homeobox ceh-60 to regulate gene expression, including repression of genes involved in innate immunity and activation of genes involved in vitellogenesis. Involved in lipid homeostasis, contributing to the formation of the cuticle. In Caenorhabditis elegans, this protein is Homeobox protein unc-62 (unc-62).